Here is a 523-residue protein sequence, read N- to C-terminus: Acetyl-CoA hydrolase (523 aa).

277-281 (GIGNI) provides a ligand contact to CoA. Catalysis depends on Glu302, which acts as the 5-glutamyl coenzyme A thioester intermediate. Residues Asn392 and Gly396 each coordinate CoA.

It belongs to the acetyl-CoA hydrolase/transferase family.

It localises to the cytoplasm. The catalysed reaction is acetyl-CoA + H2O = acetate + CoA + H(+). In terms of biological role, presumably involved in regulating the intracellular acetyl-CoA pool for fatty acid and cholesterol synthesis and fatty acid oxidation. This is Acetyl-CoA hydrolase (ACH1) from Eremothecium gossypii (strain ATCC 10895 / CBS 109.51 / FGSC 9923 / NRRL Y-1056) (Yeast).